The sequence spans 456 residues: Bifunctional protein GlmU (456 aa).

The pyrophosphorylase stretch occupies residues 1 to 229 (MLNNAMSVVI…LSEVEGVNNR (229 aa)). UDP-N-acetyl-alpha-D-glucosamine contacts are provided by residues 11–14 (LAAG), Lys25, Gln76, 81–82 (GT), 103–105 (YGD), Gly140, Glu154, Asn169, and Asn227. Asp105 is a Mg(2+) binding site. Asn227 serves as a coordination point for Mg(2+). The linker stretch occupies residues 230-250 (LQLSRLERVYQSEQAEKLLLA). Residues 251–456 (GVMLRDPARF…EGWRRPVKKK (206 aa)) form an N-acetyltransferase region. Arg333 and Lys351 together coordinate UDP-N-acetyl-alpha-D-glucosamine. His363 functions as the Proton acceptor in the catalytic mechanism. UDP-N-acetyl-alpha-D-glucosamine-binding residues include Tyr366 and Asn377. Residues Ala380, 386–387 (NY), Ser405, Ala423, and Arg440 contribute to the acetyl-CoA site.

The protein in the N-terminal section; belongs to the N-acetylglucosamine-1-phosphate uridyltransferase family. It in the C-terminal section; belongs to the transferase hexapeptide repeat family. As to quaternary structure, homotrimer. Requires Mg(2+) as cofactor.

The protein resides in the cytoplasm. It catalyses the reaction alpha-D-glucosamine 1-phosphate + acetyl-CoA = N-acetyl-alpha-D-glucosamine 1-phosphate + CoA + H(+). The enzyme catalyses N-acetyl-alpha-D-glucosamine 1-phosphate + UTP + H(+) = UDP-N-acetyl-alpha-D-glucosamine + diphosphate. It functions in the pathway nucleotide-sugar biosynthesis; UDP-N-acetyl-alpha-D-glucosamine biosynthesis; N-acetyl-alpha-D-glucosamine 1-phosphate from alpha-D-glucosamine 6-phosphate (route II): step 2/2. Its pathway is nucleotide-sugar biosynthesis; UDP-N-acetyl-alpha-D-glucosamine biosynthesis; UDP-N-acetyl-alpha-D-glucosamine from N-acetyl-alpha-D-glucosamine 1-phosphate: step 1/1. The protein operates within bacterial outer membrane biogenesis; LPS lipid A biosynthesis. In terms of biological role, catalyzes the last two sequential reactions in the de novo biosynthetic pathway for UDP-N-acetylglucosamine (UDP-GlcNAc). The C-terminal domain catalyzes the transfer of acetyl group from acetyl coenzyme A to glucosamine-1-phosphate (GlcN-1-P) to produce N-acetylglucosamine-1-phosphate (GlcNAc-1-P), which is converted into UDP-GlcNAc by the transfer of uridine 5-monophosphate (from uridine 5-triphosphate), a reaction catalyzed by the N-terminal domain. The polypeptide is Bifunctional protein GlmU (Escherichia coli O127:H6 (strain E2348/69 / EPEC)).